The sequence spans 296 residues: Probable endonuclease 4 (296 aa).

Zn(2+) contacts are provided by histidine 68, histidine 108, glutamate 145, aspartate 179, histidine 182, histidine 216, aspartate 229, histidine 231, and glutamate 261.

The protein belongs to the AP endonuclease 2 family. Zn(2+) serves as cofactor.

The catalysed reaction is Endonucleolytic cleavage to 5'-phosphooligonucleotide end-products.. In terms of biological role, endonuclease IV plays a role in DNA repair. It cleaves phosphodiester bonds at apurinic or apyrimidinic (AP) sites, generating a 3'-hydroxyl group and a 5'-terminal sugar phosphate. The chain is Probable endonuclease 4 from Geobacter sulfurreducens (strain ATCC 51573 / DSM 12127 / PCA).